We begin with the raw amino-acid sequence, 378 residues long: Dual-specificity RNA methyltransferase RlmN 2 (378 aa).

Residue E113 is the Proton acceptor of the active site. Residues 119 to 355 (TEDRRTLCVS…AAYIRRNRGR (237 aa)) form the Radical SAM core domain. C126 and C361 form a disulfide bridge. Positions 133, 137, and 140 each coordinate [4Fe-4S] cluster. Residues 188 to 189 (GE), S220, 242 to 244 (SLN), and N318 each bind S-adenosyl-L-methionine. C361 functions as the S-methylcysteine intermediate in the catalytic mechanism.

The protein belongs to the radical SAM superfamily. RlmN family. It depends on [4Fe-4S] cluster as a cofactor.

The protein localises to the cytoplasm. The enzyme catalyses adenosine(2503) in 23S rRNA + 2 reduced [2Fe-2S]-[ferredoxin] + 2 S-adenosyl-L-methionine = 2-methyladenosine(2503) in 23S rRNA + 5'-deoxyadenosine + L-methionine + 2 oxidized [2Fe-2S]-[ferredoxin] + S-adenosyl-L-homocysteine. The catalysed reaction is adenosine(37) in tRNA + 2 reduced [2Fe-2S]-[ferredoxin] + 2 S-adenosyl-L-methionine = 2-methyladenosine(37) in tRNA + 5'-deoxyadenosine + L-methionine + 2 oxidized [2Fe-2S]-[ferredoxin] + S-adenosyl-L-homocysteine. In terms of biological role, specifically methylates position 2 of adenine 2503 in 23S rRNA and position 2 of adenine 37 in tRNAs. m2A2503 modification seems to play a crucial role in the proofreading step occurring at the peptidyl transferase center and thus would serve to optimize ribosomal fidelity. The sequence is that of Dual-specificity RNA methyltransferase RlmN 2 from Myxococcus xanthus (strain DK1622).